The primary structure comprises 159 residues: uncharacterized protein (159 aa).

4 helical membrane-spanning segments follow: residues 22–42 (LFSS…SFTI), 45–65 (PIEY…LLTL), 80–100 (IWVS…SLSL), and 104–124 (FPSL…CLAF).

It is found in the membrane. This is an uncharacterized protein from Schizosaccharomyces pombe (strain 972 / ATCC 24843) (Fission yeast).